We begin with the raw amino-acid sequence, 440 residues long: Methylenetetrahydrofolate--tRNA-(uracil-5-)-methyltransferase TrmFO (440 aa).

14–19 (GAGLAG) contributes to the FAD binding site.

It belongs to the MnmG family. TrmFO subfamily. It depends on FAD as a cofactor.

The protein localises to the cytoplasm. The enzyme catalyses uridine(54) in tRNA + (6R)-5,10-methylene-5,6,7,8-tetrahydrofolate + NADH + H(+) = 5-methyluridine(54) in tRNA + (6S)-5,6,7,8-tetrahydrofolate + NAD(+). It carries out the reaction uridine(54) in tRNA + (6R)-5,10-methylene-5,6,7,8-tetrahydrofolate + NADPH + H(+) = 5-methyluridine(54) in tRNA + (6S)-5,6,7,8-tetrahydrofolate + NADP(+). Functionally, catalyzes the folate-dependent formation of 5-methyl-uridine at position 54 (M-5-U54) in all tRNAs. The sequence is that of Methylenetetrahydrofolate--tRNA-(uracil-5-)-methyltransferase TrmFO from Bdellovibrio bacteriovorus (strain ATCC 15356 / DSM 50701 / NCIMB 9529 / HD100).